The following is a 255-amino-acid chain: Triosephosphate isomerase (255 aa).

A substrate-binding site is contributed by 10-12; it reads NWK. Histidine 96 acts as the Electrophile in catalysis. Glutamate 168 serves as the catalytic Proton acceptor. Residues glycine 174, serine 213, and 234-235 each bind substrate; that span reads GG.

The protein belongs to the triosephosphate isomerase family. In terms of assembly, homodimer.

The protein localises to the cytoplasm. The catalysed reaction is D-glyceraldehyde 3-phosphate = dihydroxyacetone phosphate. It participates in carbohydrate biosynthesis; gluconeogenesis. It functions in the pathway carbohydrate degradation; glycolysis; D-glyceraldehyde 3-phosphate from glycerone phosphate: step 1/1. In terms of biological role, involved in the gluconeogenesis. Catalyzes stereospecifically the conversion of dihydroxyacetone phosphate (DHAP) to D-glyceraldehyde-3-phosphate (G3P). This chain is Triosephosphate isomerase, found in Histophilus somni (strain 2336) (Haemophilus somnus).